Here is a 344-residue protein sequence, read N- to C-terminus: Phosphate acyltransferase (344 aa).

It belongs to the PlsX family. Homodimer. Probably interacts with PlsY.

The protein resides in the cytoplasm. The enzyme catalyses a fatty acyl-[ACP] + phosphate = an acyl phosphate + holo-[ACP]. It functions in the pathway lipid metabolism; phospholipid metabolism. In terms of biological role, catalyzes the reversible formation of acyl-phosphate (acyl-PO(4)) from acyl-[acyl-carrier-protein] (acyl-ACP). This enzyme utilizes acyl-ACP as fatty acyl donor, but not acyl-CoA. The polypeptide is Phosphate acyltransferase (Actinobacillus pleuropneumoniae serotype 5b (strain L20)).